The primary structure comprises 196 residues: GTP cyclohydrolase 1 (196 aa).

Positions 85, 88, and 156 each coordinate Zn(2+).

It belongs to the GTP cyclohydrolase I family. Toroid-shaped homodecamer, composed of two pentamers of five dimers.

It carries out the reaction GTP + H2O = 7,8-dihydroneopterin 3'-triphosphate + formate + H(+). It functions in the pathway cofactor biosynthesis; 7,8-dihydroneopterin triphosphate biosynthesis; 7,8-dihydroneopterin triphosphate from GTP: step 1/1. The protein is GTP cyclohydrolase 1 of Bacteroides thetaiotaomicron (strain ATCC 29148 / DSM 2079 / JCM 5827 / CCUG 10774 / NCTC 10582 / VPI-5482 / E50).